A 120-amino-acid polypeptide reads, in one-letter code: Synaptobrevin (120 aa).

Residues 1–38 are disordered; sequence MSAPPSGPAPDAQGGAPGQPTGPPGAPPNTTSNRRLQQ. Residues 1-98 lie on the Cytoplasmic side of the membrane; that stretch reads MSAPPSGPAP…KRKYWWKNCK (98 aa). Polar residues predominate over residues 29-38; sequence NTTSNRRLQQ. Residues 35-95 enclose the v-SNARE coiled-coil homology domain; it reads RLQQTQAQVE…AKLKRKYWWK (61 aa). A helical; Anchor for type IV membrane protein transmembrane segment spans residues 99-118; that stretch reads MMIMLGGIGAIIVIVIIIYF. Residues 119-120 are Vesicular-facing; that stretch reads FT.

This sequence belongs to the synaptobrevin family. Nervous system specific.

It localises to the cytoplasmic vesicle. Its subcellular location is the secretory vesicle. The protein localises to the synaptic vesicle membrane. It is found in the synapse. The protein resides in the synaptosome. This protein may play a role in packaging, transport or release of neurotransmitters. This is Synaptobrevin from Tetronarce californica (Pacific electric ray).